The primary structure comprises 138 residues: Basic phospholipase A2 beta-bungarotoxin A-AL3 chain (138 aa).

The N-terminal stretch at 1 to 10 (LAVCVSLIGA) is a signal peptide. A propeptide spanning residues 11-18 (ANIPPQHL) is cleaved from the precursor. Intrachain disulfides connect Cys-45–Cys-137, Cys-47–Cys-63, Cys-62–Cys-118, Cys-69–Cys-111, Cys-79–Cys-104, and Cys-97–Cys-109. Residues Tyr-46, Gly-48, and Gly-50 each contribute to the Ca(2+) site. The active site involves His-66. Asp-67 provides a ligand contact to Ca(2+). Asp-112 is a catalytic residue.

The protein belongs to the phospholipase A2 family. Group I subfamily. D49 sub-subfamily. As to quaternary structure, heterodimer; disulfide-linked. The A chains have phospholipase A2 activity and the B chains show homology with the basic protease inhibitors. The cofactor is Ca(2+). As to expression, expressed by the venom gland.

Its subcellular location is the secreted. It carries out the reaction a 1,2-diacyl-sn-glycero-3-phosphocholine + H2O = a 1-acyl-sn-glycero-3-phosphocholine + a fatty acid + H(+). Functionally, snake venom phospholipase A2 (PLA2) that inhibits neuromuscular transmission by blocking acetylcholine release from the nerve termini. PLA2 catalyzes the calcium-dependent hydrolysis of the 2-acyl groups in 3-sn-phosphoglycerides. This is Basic phospholipase A2 beta-bungarotoxin A-AL3 chain from Bungarus multicinctus (Many-banded krait).